The sequence spans 629 residues: 1-deoxy-D-xylulose-5-phosphate synthase (629 aa).

Thiamine diphosphate-binding positions include histidine 78 and alanine 119 to serine 121. Aspartate 150 is a Mg(2+) binding site. Residues glycine 151 to alanine 152, asparagine 179, tyrosine 286, and glutamate 368 each bind thiamine diphosphate. Position 179 (asparagine 179) interacts with Mg(2+).

This sequence belongs to the transketolase family. DXPS subfamily. In terms of assembly, homodimer. Mg(2+) serves as cofactor. The cofactor is thiamine diphosphate.

It catalyses the reaction D-glyceraldehyde 3-phosphate + pyruvate + H(+) = 1-deoxy-D-xylulose 5-phosphate + CO2. It participates in metabolic intermediate biosynthesis; 1-deoxy-D-xylulose 5-phosphate biosynthesis; 1-deoxy-D-xylulose 5-phosphate from D-glyceraldehyde 3-phosphate and pyruvate: step 1/1. Functionally, catalyzes the acyloin condensation reaction between C atoms 2 and 3 of pyruvate and glyceraldehyde 3-phosphate to yield 1-deoxy-D-xylulose-5-phosphate (DXP). This chain is 1-deoxy-D-xylulose-5-phosphate synthase, found in Acidovorax sp. (strain JS42).